The primary structure comprises 305 residues: Homoserine O-acetyltransferase (305 aa).

The active-site Acyl-thioester intermediate is the Cys-142. Positions 163 and 192 each coordinate substrate. Catalysis depends on His-235, which acts as the Proton acceptor. Residue Glu-237 is part of the active site. Arg-249 provides a ligand contact to substrate.

It belongs to the MetA family.

It localises to the cytoplasm. The enzyme catalyses L-homoserine + acetyl-CoA = O-acetyl-L-homoserine + CoA. Its pathway is amino-acid biosynthesis; L-methionine biosynthesis via de novo pathway; O-acetyl-L-homoserine from L-homoserine: step 1/1. Transfers an acetyl group from acetyl-CoA to L-homoserine, forming acetyl-L-homoserine. This chain is Homoserine O-acetyltransferase, found in Bacteroides fragilis (strain ATCC 25285 / DSM 2151 / CCUG 4856 / JCM 11019 / LMG 10263 / NCTC 9343 / Onslow / VPI 2553 / EN-2).